We begin with the raw amino-acid sequence, 205 residues long: Holliday junction branch migration complex subunit RuvA (205 aa).

The tract at residues 1-64 is domain I; the sequence is MIGRLRGIIL…EDAQLLFGFN (64 aa). Positions 65-142 are domain II; that stretch reads DKQERALFRE…KGLSGDLFNP (78 aa). Residues 143-156 form a flexible linker region; that stretch reads VSDIPLASPASAES. The domain III stretch occupies residues 157–205; that stretch reads RASDPEAEAAAALVALGYKPQEASRMISKIARPEADCETLIRDALRAAL.

It belongs to the RuvA family. In terms of assembly, homotetramer. Forms an RuvA(8)-RuvB(12)-Holliday junction (HJ) complex. HJ DNA is sandwiched between 2 RuvA tetramers; dsDNA enters through RuvA and exits via RuvB. An RuvB hexamer assembles on each DNA strand where it exits the tetramer. Each RuvB hexamer is contacted by two RuvA subunits (via domain III) on 2 adjacent RuvB subunits; this complex drives branch migration. In the full resolvosome a probable DNA-RuvA(4)-RuvB(12)-RuvC(2) complex forms which resolves the HJ.

The protein localises to the cytoplasm. Its function is as follows. The RuvA-RuvB-RuvC complex processes Holliday junction (HJ) DNA during genetic recombination and DNA repair, while the RuvA-RuvB complex plays an important role in the rescue of blocked DNA replication forks via replication fork reversal (RFR). RuvA specifically binds to HJ cruciform DNA, conferring on it an open structure. The RuvB hexamer acts as an ATP-dependent pump, pulling dsDNA into and through the RuvAB complex. HJ branch migration allows RuvC to scan DNA until it finds its consensus sequence, where it cleaves and resolves the cruciform DNA. In Pectobacterium carotovorum subsp. carotovorum (strain PC1), this protein is Holliday junction branch migration complex subunit RuvA.